Reading from the N-terminus, the 349-residue chain is GATA zinc finger domain-containing protein 24 (349 aa).

Composition is skewed to low complexity over residues Asn-95 to Asn-169 and Asn-177 to Ser-195. Disordered regions lie at residues Asn-95–Lys-227 and Asp-250–Gln-294. Positions Glu-196–Asn-212 are enriched in basic and acidic residues. Residues Ser-257–Ser-272 are compositionally biased toward low complexity. Residues Lys-278–Lys-289 show a composition bias toward basic residues. A GATA-type zinc finger spans residues Cys-295 to Cys-323.

This is GATA zinc finger domain-containing protein 24 (gtaX) from Dictyostelium discoideum (Social amoeba).